The following is a 509-amino-acid chain: ATP synthase subunit alpha (509 aa).

169–176 (GDRQTGKT) is an ATP binding site.

The protein belongs to the ATPase alpha/beta chains family. F-type ATPases have 2 components, CF(1) - the catalytic core - and CF(0) - the membrane proton channel. CF(1) has five subunits: alpha(3), beta(3), gamma(1), delta(1), epsilon(1). CF(0) has three main subunits: a(1), b(2) and c(9-12). The alpha and beta chains form an alternating ring which encloses part of the gamma chain. CF(1) is attached to CF(0) by a central stalk formed by the gamma and epsilon chains, while a peripheral stalk is formed by the delta and b chains.

The protein resides in the cell inner membrane. The enzyme catalyses ATP + H2O + 4 H(+)(in) = ADP + phosphate + 5 H(+)(out). In terms of biological role, produces ATP from ADP in the presence of a proton gradient across the membrane. The alpha chain is a regulatory subunit. This chain is ATP synthase subunit alpha, found in Brucella melitensis biotype 1 (strain ATCC 23456 / CCUG 17765 / NCTC 10094 / 16M).